Consider the following 445-residue polypeptide: Rab GDP dissociation inhibitor beta (445 aa).

Methionine 1 carries the post-translational modification N-acetylmethionine. Lysine 57 bears the N6-succinyllysine mark. Lysine 112 carries the N6-acetyllysine modification. Phosphoserine is present on serine 130. At lysine 269 the chain carries N6-acetyllysine. Serine 382 bears the Phosphoserine mark.

It belongs to the Rab GDI family. Interacts with RHOH. Interacts with the GDP-bound inactive forms of RAB3A, RAB3B, RAB3C, RAB5A, RAB5B, RAB5C, RAB8A, RAB8B, RAB10, RAB12, RAB35, and RAB43; binds RAB3D to a lesser extent. Interacts with DZIP1; this interaction negatively regulates the interaction of GDI2 with GDP-bound RAB8A.

The protein localises to the cytoplasm. It localises to the membrane. It is found in the golgi apparatus. The protein resides in the trans-Golgi network. GDP-dissociation inhibitor preventing the GDP to GTP exchange of most Rab proteins. By keeping these small GTPases in their inactive GDP-bound form regulates intracellular membrane trafficking. Negatively regulates protein transport to the cilium and ciliogenesis through the inhibition of RAB8A. The sequence is that of Rab GDP dissociation inhibitor beta (GDI2) from Canis lupus familiaris (Dog).